A 412-amino-acid chain; its full sequence is MSSADTPINWKQNLTVTWLGCFLTGAAFSLVMPFLPLYVEQLGVTGHSALNMWSGLVFSITFLFSAIASPFWGGLADRKGRKIMLLRSALGMSVVMMLMGMAQNIWQFLLLRALLGLLGGFIPNANALIATQIPRHKSGWALGTLSTGAVSGALLGPLAGGFLADHWGLRTVFFMTAAVLFICFLFTLFLIRENFVPIAKKEMLSAREVFSSLQNPKLVLSLFVTSLIIQVATGSIAPILTLYVRDLAGNVSNIAFISGMIASVPGIAALMSAPRLGRLGDRIGPEKILIVALIISVLLLIPMSFVQTPLQLGILRFLLGAADGALLPAVQTLLVYNSTSQISGRIFSYNQSFRDIGNVTGPLIGASVSANYGFRAVFLVTAGVVLFNAIYSTLSLRRPAAEASQPDRHSVN.

Transmembrane regions (helical) follow at residues 19 to 39 (LGCFLTGAAFSLVMPFLPLYV), 56 to 76 (LVFSITFLFSAIASPFWGGLA), 90 to 110 (LGMSVVMMLMGMAQNIWQFLL), 113 to 133 (ALLGLLGGFIPNANALIATQI), 144 to 164 (TLSTGAVSGALLGPLAGGFLA), 171 to 191 (TVFFMTAAVLFICFLFTLFLI), 222 to 242 (LFVTSLIIQVATGSIAPILTL), 254 to 274 (IAFISGMIASVPGIAALMSAP), 288 to 308 (ILIVALIISVLLLIPMSFVQT), 317 to 337 (FLLGAADGALLPAVQTLLVYN), and 376 to 396 (AVFLVTAGVVLFNAIYSTLSL).

It belongs to the major facilitator superfamily. DHA1 family. MdtG (TC 2.A.1.2.20) subfamily.

It is found in the cell inner membrane. The sequence is that of Multidrug resistance protein MdtG from Klebsiella pneumoniae (strain 342).